A 164-amino-acid polypeptide reads, in one-letter code: UPF0304 protein YfbU (164 aa).

It belongs to the UPF0304 family.

The protein is UPF0304 protein YfbU of Salmonella choleraesuis (strain SC-B67).